Here is a 217-residue protein sequence, read N- to C-terminus: Lectin ADEL (217 aa).

Cystine bridges form between C5-C187, C42-C68, C61-C77, C114-C135, and C142-C206. Residue N30 is glycosylated (N-linked (GlcNAc...) asparagine). 2 N-linked (GlcNAc...) asparagine glycosylation sites follow: N102 and N126.

In terms of assembly, homodimer; disulfide-linked. Post-translationally, contains disulfide bonds.

In terms of biological role, binds in decreasing order of affinity: galacturonic acid, D-galactosamine, methyl-alpha-D-galactopyranoside and further galactose-containing carbohydrates. Has hemagglutinating activity against human and rabbit erythrocytes. This Aplysia dactylomela (Spotted sea hare) protein is Lectin ADEL.